Reading from the N-terminus, the 315-residue chain is tRNA dimethylallyltransferase (315 aa).

Residue 11 to 18 (GPTASGKS) coordinates ATP. Substrate is bound at residue 13 to 18 (TASGKS). 2 interaction with substrate tRNA regions span residues 36–39 (DSMQ) and 160–164 (QRLIR).

Belongs to the IPP transferase family. In terms of assembly, monomer. It depends on Mg(2+) as a cofactor.

It catalyses the reaction adenosine(37) in tRNA + dimethylallyl diphosphate = N(6)-dimethylallyladenosine(37) in tRNA + diphosphate. Functionally, catalyzes the transfer of a dimethylallyl group onto the adenine at position 37 in tRNAs that read codons beginning with uridine, leading to the formation of N6-(dimethylallyl)adenosine (i(6)A). The polypeptide is tRNA dimethylallyltransferase (Rickettsia bellii (strain RML369-C)).